The following is a 170-amino-acid chain: ATP synthase F(1) complex subunit delta, mitochondrial (170 aa).

A mitochondrion-targeting transit peptide spans 1–33 (MIRSIIKSSNNLLKSNVAINSNKRFFATEASAT).

Belongs to the ATPase epsilon chain family. In terms of assembly, component of the ATP synthase complex composed at least of ATP5F1A/subunit alpha, ATP5F1B/subunit beta, ATP5MC1/subunit c (homooctomer), MT-ATP6/subunit a, MT-ATP8/subunit 8, ATP5ME/subunit e, ATP5MF/subunit f, ATP5MG/subunit g, ATP5MK/subunit k, ATP5MJ/subunit j, ATP5F1C/subunit gamma, ATP5F1D/subunit delta, ATP5F1E/subunit epsilon, ATP5PF/subunit F6, ATP5PB/subunit b, ATP5PD/subunit d, ATP5PO/subunit OSCP. ATP synthase complex consists of a soluble F(1) head domain (subunits alpha(3) and beta(3)) - the catalytic core - and a membrane F(0) domain - the membrane proton channel (subunits c, a, 8, e, f, g, k and j). These two domains are linked by a central stalk (subunits gamma, delta, and epsilon) rotating inside the F1 region and a stationary peripheral stalk (subunits F6, b, d, and OSCP).

The protein localises to the mitochondrion. It localises to the mitochondrion inner membrane. Its function is as follows. Subunit delta, of the mitochondrial membrane ATP synthase complex (F(1)F(0) ATP synthase or Complex V) that produces ATP from ADP in the presence of a proton gradient across the membrane which is generated by electron transport complexes of the respiratory chain. ATP synthase complex consist of a soluble F(1) head domain - the catalytic core - and a membrane F(1) domain - the membrane proton channel. These two domains are linked by a central stalk rotating inside the F(1) region and a stationary peripheral stalk. During catalysis, ATP synthesis in the catalytic domain of F(1) is coupled via a rotary mechanism of the central stalk subunits to proton translocation. In vivo, can only synthesize ATP although its ATP hydrolase activity can be activated artificially in vitro. With the central stalk subunit gamma, is essential for the biogenesis of F(1) catalytic part of the ATP synthase complex namely in the formation of F1 assembly intermediate. The polypeptide is ATP synthase F(1) complex subunit delta, mitochondrial (Dictyostelium discoideum (Social amoeba)).